The chain runs to 130 residues: uncharacterized protein (130 aa).

Composition is skewed to polar residues over residues 1–27 and 36–46; these read MEILNQFSQFSPNMEAQGASSIPQPSQ and QAENQETAKNG. Disordered regions lie at residues 1 to 46 and 103 to 130; these read MEIL…AKNG and VSAQTQKATSVKFDRRRNELDSDEELDL. A coiled-coil region spans residues 27 to 51; sequence QDAHEKARQQAENQETAKNGMISQI.

Belongs to the PDCD5 family.

This is an uncharacterized protein from Caenorhabditis elegans.